Here is a 151-residue protein sequence, read N- to C-terminus: 3-hydroxyacyl-[acyl-carrier-protein] dehydratase FabZ (151 aa).

Residue H49 is part of the active site.

This sequence belongs to the thioester dehydratase family. FabZ subfamily.

It is found in the cytoplasm. The enzyme catalyses a (3R)-hydroxyacyl-[ACP] = a (2E)-enoyl-[ACP] + H2O. Its function is as follows. Involved in unsaturated fatty acids biosynthesis. Catalyzes the dehydration of short chain beta-hydroxyacyl-ACPs and long chain saturated and unsaturated beta-hydroxyacyl-ACPs. This is 3-hydroxyacyl-[acyl-carrier-protein] dehydratase FabZ from Wolinella succinogenes (strain ATCC 29543 / DSM 1740 / CCUG 13145 / JCM 31913 / LMG 7466 / NCTC 11488 / FDC 602W) (Vibrio succinogenes).